The chain runs to 367 residues: D-alanine--D-alanine ligase (367 aa).

In terms of domain architecture, ATP-grasp spans 150 to 357; sequence KKLLASAGLP…YPTLLATMVE (208 aa). 178–233 lines the ATP pocket; sequence RERLGLPVFVKPSRGGSSIGVSRVTAWDELPAAIELARRHDPKVIIEAAVPGRELE. Mg(2+)-binding residues include Asp312, Glu324, and Asn326.

Belongs to the D-alanine--D-alanine ligase family. Requires Mg(2+) as cofactor. The cofactor is Mn(2+).

The protein localises to the cytoplasm. It carries out the reaction 2 D-alanine + ATP = D-alanyl-D-alanine + ADP + phosphate + H(+). Its pathway is cell wall biogenesis; peptidoglycan biosynthesis. In terms of biological role, cell wall formation. The sequence is that of D-alanine--D-alanine ligase from Mycolicibacterium gilvum (strain PYR-GCK) (Mycobacterium gilvum (strain PYR-GCK)).